A 561-amino-acid polypeptide reads, in one-letter code: 7-keto 8-aminopelargonic acid transporter (561 aa).

At 1 to 49 the chain is on the cytoplasmic side; sequence MNRVGAVFLFVYERNFFLSIVPDRHRTEIRMSSSERSEVKFDKHFNWWS. Residues 50–70 traverse the membrane as a helical segment; it reads LLGIAFSLSCSWVGISASMAV. At 71 to 77 the chain is on the extracellular side; it reads GIASGGP. Residues 78–98 traverse the membrane as a helical segment; that stretch reads LLIIYGLIIAAFFSLMCGISL. Residues 99-160 are Cytoplasmic-facing; sequence GDFAAILPNS…NVEVSSKFQK (62 aa). The chain crosses the membrane as a helical span at residues 161–181; it reads VSSMVVGLLNYFGAIFTTASI. The Extracellular portion of the chain corresponds to 182–204; sequence CSSLSMSCIGIHKLLHPDYELKH. The helical transmembrane segment at 205–225 threads the bilayer; it reads WHVFVGYECINAVLTLFNIYS. Over 226–230 the chain is Cytoplasmic; it reads TPLPY. The chain crosses the membrane as a helical span at residues 231–251; it reads ISQFGLYTSLLSFAMTFIICI. Over 252–281 the chain is Extracellular; the sequence is VSRSDNTVDPWPKASNIFGSFDNQTGWNSS. Residues 282-302 form a helical membrane-spanning segment; sequence GMAFVVGLVNPIWAFVGIDSA. Over 303-321 the chain is Cytoplasmic; sequence THMIDEVGYSKSRFLVPKV. Residues 322-342 form a helical membrane-spanning segment; that stretch reads IITTIIVGFVTSFIYCVGLFF. The Extracellular segment spans residues 343 to 369; it reads CITDQTAVVESILPIVEIFYQATGNRN. The chain crosses the membrane as a helical span at residues 370 to 390; sequence LSVFLQCMCITTGFVSGIASG. Over 391–439 the chain is Cytoplasmic; the sequence is TWQSRILQSFGKSYAPFYKEGSLGNKSLKKLAVLTPGFKSPLYAHFLSQ. A helical membrane pass occupies residues 440–460; sequence ICVTIIGCIFMGSSTAFNAII. A topological domain (extracellular) is located at residue T461. The helical transmembrane segment at 462-482 threads the bilayer; sequence ACITLLLMSYAVPSFIFLFVI. Residues 483–507 are Cytoplasmic-facing; it reads KKEKFIHRIESDVNCVSRPNRRRMS. Residues 508-528 traverse the membrane as a helical segment; it reads MIPHIICILWTLFCLVFLSFP. At 529 to 540 the chain is on the extracellular side; it reads YTLPVTAGNMNY. Residues 541–560 form a helical membrane-spanning segment; it reads TSVVYAVVFCIISIVVFPTC. Position 561 (I561) is a topological domain, cytoplasmic.

This sequence belongs to the amino acid-polyamine-organocation (APC) superfamily.

It localises to the membrane. Its function is as follows. Transport into the cell of 7-keto 8-aminopelargonic acid. This chain is 7-keto 8-aminopelargonic acid transporter (BIO5), found in Saccharomyces cerevisiae (strain ATCC 204508 / S288c) (Baker's yeast).